A 318-amino-acid chain; its full sequence is Pantothenate kinase (318 aa).

96 to 103 (GSVAVGKS) is a binding site for ATP.

This sequence belongs to the prokaryotic pantothenate kinase family.

It is found in the cytoplasm. The enzyme catalyses (R)-pantothenate + ATP = (R)-4'-phosphopantothenate + ADP + H(+). It functions in the pathway cofactor biosynthesis; coenzyme A biosynthesis; CoA from (R)-pantothenate: step 1/5. This is Pantothenate kinase from Rhodopseudomonas palustris (strain BisA53).